We begin with the raw amino-acid sequence, 291 residues long: tRNA dimethylallyltransferase (291 aa).

Residue Gly5–Ser12 coordinates ATP. Residue Thr7–Ser12 coordinates substrate. The tract at residues Asp30–Gln33 is interaction with substrate tRNA.

The protein belongs to the IPP transferase family. As to quaternary structure, monomer. Requires Mg(2+) as cofactor.

It catalyses the reaction adenosine(37) in tRNA + dimethylallyl diphosphate = N(6)-dimethylallyladenosine(37) in tRNA + diphosphate. Functionally, catalyzes the transfer of a dimethylallyl group onto the adenine at position 37 in tRNAs that read codons beginning with uridine, leading to the formation of N6-(dimethylallyl)adenosine (i(6)A). The polypeptide is tRNA dimethylallyltransferase (Frankia casuarinae (strain DSM 45818 / CECT 9043 / HFP020203 / CcI3)).